The chain runs to 309 residues: Olfactory receptor 5B21 (309 aa).

Topologically, residues 1-26 (MENSTEVTEFILLGLTDDPNLQIPLL) are extracellular. Asn3 carries an N-linked (GlcNAc...) asparagine glycan. A helical transmembrane segment spans residues 27–47 (LAFLFIYLITLLGNGGMMVII). At 48–55 (HSDSHLHT) the chain is on the cytoplasmic side. A helical transmembrane segment spans residues 56–76 (PMYFFLSNLSLVDLGYSSAVA). Topologically, residues 77-95 (PKTVAALRSGDKAISYDGC) are extracellular. Residues Cys95 and Cys177 are joined by a disulfide bond. Residues 96–116 (AAQFFFFVGFATVECYLLASM) traverse the membrane as a helical segment. Residues 117–137 (AYDRHAAVCRPLHYTTTMTAG) are Cytoplasmic-facing. Residues 138 to 158 (VCALLATGSYVSGFLNASIHA) traverse the membrane as a helical segment. The Extracellular portion of the chain corresponds to 159 to 199 (AGTFRLSFCGSNEINHFFCDIPPLLALSCSDTRISKLVVFV). Residues 200–220 (AGFNVFFTLLVILISYFFICI) form a helical membrane-spanning segment. The Cytoplasmic portion of the chain corresponds to 221–235 (TIQRMHSAEGQKKVF). A helical membrane pass occupies residues 236 to 256 (STCASHLTALSIFYGTIIFMY). Topologically, residues 257 to 270 (LQPNSSQSVDTDKI) are extracellular. Residue Asn260 is glycosylated (N-linked (GlcNAc...) asparagine). A helical transmembrane segment spans residues 271 to 291 (ASVFYTVVIPMLNPLIYSLRN). The Cytoplasmic portion of the chain corresponds to 292-309 (KEVKSALWKILNKLYPQY).

It belongs to the G-protein coupled receptor 1 family.

It is found in the cell membrane. Its function is as follows. Odorant receptor. In Homo sapiens (Human), this protein is Olfactory receptor 5B21.